The following is a 280-amino-acid chain: MIQFVIPSYQRVGAVSALDMFPTDYEPHIVVREHEEKAYNDAYGSRAKIITIPDGVNGIAGTRKAITDMYAGQRIWMIDDDTTIRMSSMRKRDDRRCVDKVNQLTHEQFYELIQYVEDAMDCGYYHGHARLPIFKITSSWGNYRENSYGFTNTWYDLGKLTTEQIGYGKIDLCEDMYAFLNLINQGYPHLALFKYLVVSGKAQAPGGCSSIRSNSKHNRALEQINREFPEQARWKTSNIEKRKSLGEEDEPLKVLRMCVSRKEKSEAFHKFNAIHPIAVD.

The protein operates within genetic information processing; DNA modification. Transfers a gentiobiosyl-group on a hydroxymethylcytosine residue in DNA. Is involved in a DNA modification process to protects the phage genome against its own nucleases and the host restriction endonuclease system. This chain is Beta-glucosyl-HMC-alpha-glucosyl-transferase, found in Enterobacteria phage T6 (Bacteriophage T6).